The chain runs to 473 residues: Glutamate--tRNA ligase 1 (473 aa).

A 'HIGH' region motif is present at residues 10–20; it reads PSPTGFLHIGG. The 'KMSKS' region motif lies at 252-256; that stretch reads KLSKR. Lysine 255 is an ATP binding site.

The protein belongs to the class-I aminoacyl-tRNA synthetase family. Glutamate--tRNA ligase type 1 subfamily. Monomer.

It localises to the cytoplasm. It carries out the reaction tRNA(Glu) + L-glutamate + ATP = L-glutamyl-tRNA(Glu) + AMP + diphosphate. Catalyzes the attachment of glutamate to tRNA(Glu) in a two-step reaction: glutamate is first activated by ATP to form Glu-AMP and then transferred to the acceptor end of tRNA(Glu). The polypeptide is Glutamate--tRNA ligase 1 (Wolbachia pipientis wMel).